Reading from the N-terminus, the 393-residue chain is NAD(P)H-quinone oxidoreductase subunit H, chloroplastic (393 aa).

It belongs to the complex I 49 kDa subunit family. NDH is composed of at least 16 different subunits, 5 of which are encoded in the nucleus.

Its subcellular location is the plastid. It localises to the chloroplast thylakoid membrane. It carries out the reaction a plastoquinone + NADH + (n+1) H(+)(in) = a plastoquinol + NAD(+) + n H(+)(out). The enzyme catalyses a plastoquinone + NADPH + (n+1) H(+)(in) = a plastoquinol + NADP(+) + n H(+)(out). Its function is as follows. NDH shuttles electrons from NAD(P)H:plastoquinone, via FMN and iron-sulfur (Fe-S) centers, to quinones in the photosynthetic chain and possibly in a chloroplast respiratory chain. The immediate electron acceptor for the enzyme in this species is believed to be plastoquinone. Couples the redox reaction to proton translocation, and thus conserves the redox energy in a proton gradient. This is NAD(P)H-quinone oxidoreductase subunit H, chloroplastic from Cicer arietinum (Chickpea).